An 82-amino-acid polypeptide reads, in one-letter code: Putative membrane protein insertion efficiency factor (82 aa).

Belongs to the UPF0161 family.

It is found in the cell inner membrane. Could be involved in insertion of integral membrane proteins into the membrane. This chain is Putative membrane protein insertion efficiency factor, found in Rickettsia africae (strain ESF-5).